The following is a 366-amino-acid chain: Aminomethyltransferase (366 aa).

This sequence belongs to the GcvT family. As to quaternary structure, the glycine cleavage system is composed of four proteins: P, T, L and H.

It carries out the reaction N(6)-[(R)-S(8)-aminomethyldihydrolipoyl]-L-lysyl-[protein] + (6S)-5,6,7,8-tetrahydrofolate = N(6)-[(R)-dihydrolipoyl]-L-lysyl-[protein] + (6R)-5,10-methylene-5,6,7,8-tetrahydrofolate + NH4(+). The glycine cleavage system catalyzes the degradation of glycine. In Bacillus anthracis (strain A0248), this protein is Aminomethyltransferase.